The primary structure comprises 784 residues: Replication protein A 70 kDa DNA-binding subunit E (784 aa).

The disordered stretch occupies residues 114 to 224 (HPVPGGKHND…NRGPVARNEA (111 aa)). 2 stretches are compositionally biased toward polar residues: residues 132–148 (KFNT…QVNN) and 167–190 (SSVP…NGVT). Residues 241 to 327 (WTIKARVTNK…RNDYEIMLDN (87 aa)) constitute a DNA-binding region (OB). The segment at 532–558 (CPIMNGDRPCSKKVTDNGDGTWRCEKC) adopts a C4-type zinc-finger fold. Disordered regions lie at residues 678-707 (LPIN…PSSV) and 746-784 (AKCP…VGSY). Over residues 695 to 707 (GIGSSGTRDPSSV) the composition is skewed to polar residues. Positions 760-776 (YMGGSYRGTTGSYGGGL) are enriched in gly residues.

The protein belongs to the replication factor A protein 1 family. In terms of assembly, heterotrimer of RPA1, RPA2 and RPA3 (canonical replication protein A complex).

The protein resides in the nucleus. Functionally, component of the replication protein A complex (RPA) required for DNA recombination, repair and replication. The activity of RPA is mediated by single-stranded DNA binding and protein interactions. Probably involved in repair of double-strand DNA breaks (DSBs) induced by genotoxic stresses. This chain is Replication protein A 70 kDa DNA-binding subunit E (RPA1E), found in Arabidopsis thaliana (Mouse-ear cress).